The following is an 881-amino-acid chain: Plakophilin-2 (881 aa).

Residues 1–348 are required for interaction with influenza A virus RNA polymerase subunit PB1; the sequence is MAAPGAPAEY…FTDSQLGNAD (348 aa). The tract at residues 1–360 is required for binding to single-stranded DNA; it reads MAAPGAPAEY…MTLERAVSML (360 aa). Position 44 is a phosphoserine (Ser44). The residue at position 46 (Arg46) is an Omega-N-methylarginine. Ser82 is modified (phosphoserine; by MARK3). Residues Ser132, Ser135, Ser151, Ser154, Ser155, Ser169, and Ser172 each carry the phosphoserine modification. Thr177 is subject to Phosphothreonine. Residues Ser183, Ser197, Ser251, Ser294, and Ser329 each carry the phosphoserine modification. Residues 282–314 form a disordered region; it reads QNRASRSSWHQSSFHSTRTLREAGPSVAVDSSG. The span at 286–297 shows a compositional bias: low complexity; that stretch reads SRSSWHQSSFHS. ARM repeat units lie at residues 341–383, 385–424, 427–467, 571–616, 671–711, 719–758, 763–804, and 807–849; these read DSQL…ECFQ, SEARKRVNQLRGILKLLQLLKVQNEDVQRAVCGALRNLVF, NDNK…NLRS, DGRK…NLSY, PKGV…NLTA, SVAQTVVQKESGLQHTRKMLHVGDPSVKKTAISLLRNLSR, QNEI…NIIQ, and YQNA…SLWA.

The protein belongs to the beta-catenin family. In terms of assembly, interacts with DSC2. Interacts with JUP. Interacts with KRT5/CK5, KRT8/CK8, KRT14/CK14, KRT18/CK18 and VIM. Interacts (via N-terminus) with MARK3/C-TAK1. Interacts with DSP. Interacts with DSG1, DSG2 and DSG3. Interacts (via N-terminus) with CTNNB1. Interacts with CDH1. Interacts with the RNA polymerase III (Pol III) complex proteins POLR3A/RPC155, POLR3F/RPC39 and POLR3C/RPC82. Interacts with CTNNA3. Interacts (via N-terminus) with SCN5A/Nav1.5. Interacts with ANK3/ANKG and GJA1/CX43. As to quaternary structure, (Microbial infection) Interacts (via N-terminus) with influenza A virus RNA polymerase subunit PB1 (via C-terminus); the interaction competitively inhibits the interaction between the subunits PB1 and PB2. Expressed at intercalated disks in the heart (at protein level). Expressed in gingival epithelial, endothelial and fibroblast cells (at protein level). Faintly expressed in tracheal epithelial cells (at protein level). Widely expressed. Found at desmosomal plaques in simple and stratified epithelia and in non-epithelial tissues such as myocardium and lymph node follicles. In most stratified epithelia found in the desmosomes of the basal cell layer and seems to be absent from suprabasal strata. In terms of tissue distribution, (Microbial infection) Abundantly expressed in tracheal epithelial cells following influenza A virus infection (at protein level).

It localises to the nucleus. It is found in the cell junction. The protein resides in the desmosome. The protein localises to the cytoplasm. Its function is as follows. A component of desmosome cell-cell junctions which are required for positive regulation of cellular adhesion. Regulates focal adhesion turnover resulting in changes in focal adhesion size, cell adhesion and cell spreading, potentially via transcriptional modulation of beta-integrins. Required to maintain gingival epithelial barrier function. Important component of the desmosome that is also required for localization of desmosome component proteins such as DSC2, DSG2 and JUP to the desmosome cell-cell junction. Required for the formation of desmosome cell junctions in cardiomyocytes, thereby required for the correct formation of the heart, specifically trabeculation and formation of the atria walls. Loss of desmosome cell junctions leads to mis-localization of DSP and DSG2 resulting in disruption of cell-cell adhesion and disordered intermediate filaments. Modulates profibrotic gene expression in cardiomyocytes via regulation of DSP expression and subsequent activation of downstream TGFB1 and MAPK14/p38 MAPK signaling. Required for cardiac sodium current propagation and electrical synchrony in cardiac myocytes, via ANK3 stabilization and modulation of SCN5A/Nav1.5 localization to cell-cell junctions. Required for mitochondrial function, nuclear envelope integrity and positive regulation of SIRT3 transcription via maintaining DES localization at its nuclear envelope and cell tip anchoring points, and thereby preserving regulation of the transcriptional program. Maintenance of nuclear envelope integrity protects against DNA damage and transcriptional dysregulation of genes, especially those involved in the electron transport chain, thereby preserving mitochondrial function and protecting against superoxide radical anion generation. Binds single-stranded DNA (ssDNA). May regulate the localization of GJA1 to gap junctions in intercalated disks of the heart. Involved in the inhibition of viral infection by influenza A viruses (IAV). Acts as a host restriction factor for IAV viral propagation, potentially via disrupting the interaction of IAV polymerase complex proteins. This Homo sapiens (Human) protein is Plakophilin-2.